We begin with the raw amino-acid sequence, 224 residues long: ATP-dependent dethiobiotin synthetase BioD (224 aa).

An ATP-binding site is contributed by 13–18 (NVGKTI). Threonine 17 lines the Mg(2+) pocket. Lysine 38 is a catalytic residue. Serine 42 lines the substrate pocket. ATP-binding positions include aspartate 55, 116-119 (EGAG), 176-177 (NN), and asparagine 211. Mg(2+) is bound by residues aspartate 55 and glutamate 116.

The protein belongs to the dethiobiotin synthetase family. As to quaternary structure, homodimer. The cofactor is Mg(2+).

The protein resides in the cytoplasm. It carries out the reaction (7R,8S)-7,8-diammoniononanoate + CO2 + ATP = (4R,5S)-dethiobiotin + ADP + phosphate + 3 H(+). It functions in the pathway cofactor biosynthesis; biotin biosynthesis; biotin from 7,8-diaminononanoate: step 1/2. Its function is as follows. Catalyzes a mechanistically unusual reaction, the ATP-dependent insertion of CO2 between the N7 and N8 nitrogen atoms of 7,8-diaminopelargonic acid (DAPA, also called 7,8-diammoniononanoate) to form a ureido ring. The protein is ATP-dependent dethiobiotin synthetase BioD of Buchnera aphidicola subsp. Acyrthosiphon pisum (strain 5A).